Here is a 77-residue protein sequence, read N- to C-terminus: Small ribosomal subunit protein bS21 (77 aa).

Belongs to the bacterial ribosomal protein bS21 family.

The polypeptide is Small ribosomal subunit protein bS21 (Bartonella tribocorum (strain CIP 105476 / IBS 506)).